The sequence spans 237 residues: ATP synthase subunit 4, mitochondrial (237 aa).

A mitochondrion-targeting transit peptide spans 1 to 30 (MFRALTLKASARPVVAGLCSRQAPIAAVRY).

The protein belongs to the eukaryotic ATPase B chain family.

It localises to the mitochondrion. It is found in the mitochondrion inner membrane. Mitochondrial membrane ATP synthase (F(1)F(0) ATP synthase or Complex V) produces ATP from ADP in the presence of a proton gradient across the membrane which is generated by electron transport complexes of the respiratory chain. F-type ATPases consist of two structural domains, F(1) - containing the extramembraneous catalytic core, and F(0) - containing the membrane proton channel, linked together by a central stalk and a peripheral stalk. During catalysis, ATP synthesis in the catalytic domain of F(1) is coupled via a rotary mechanism of the central stalk subunits to proton translocation. Part of the complex F(0) domain and the peripheric stalk, which acts as a stator to hold the catalytic alpha(3)beta(3) subcomplex and subunit a/ATP6 static relative to the rotary elements. This is ATP synthase subunit 4, mitochondrial (ATP4) from Kluyveromyces lactis (strain ATCC 8585 / CBS 2359 / DSM 70799 / NBRC 1267 / NRRL Y-1140 / WM37) (Yeast).